A 99-amino-acid polypeptide reads, in one-letter code: UPF0235 protein PM1313 (99 aa).

The protein belongs to the UPF0235 family.

In Pasteurella multocida (strain Pm70), this protein is UPF0235 protein PM1313.